A 373-amino-acid polypeptide reads, in one-letter code: Leucoanthocyanidin dioxygenase 2 (373 aa).

In terms of domain architecture, Fe2OG dioxygenase spans Leu-216–Pro-315. Fe cation contacts are provided by His-240, Asp-242, and His-296. Arg-306 is a 2-oxoglutarate binding site.

It belongs to the iron/ascorbate-dependent oxidoreductase family. Requires L-ascorbate as cofactor. Fe(2+) is required as a cofactor.

The enzyme catalyses a (2R,3S,4S)-leucoanthocyanidin + 2-oxoglutarate + O2 = a 4-H-anthocyanidin with a 3-hydroxy group + succinate + CO2 + 2 H2O. It functions in the pathway pigment biosynthesis; anthocyanin biosynthesis. Involved in anthocyanin and protoanthocyanidin biosynthesis by catalyzing the oxidation of leucoanthocyanidins into anthocyanidins. The sequence is that of Leucoanthocyanidin dioxygenase 2 from Oryza sativa subsp. japonica (Rice).